Reading from the N-terminus, the 252-residue chain is Uracil-DNA glycosylase (252 aa).

D87 serves as the catalytic Proton acceptor.

It belongs to the uracil-DNA glycosylase (UDG) superfamily. UNG family.

The protein localises to the host nucleus. It catalyses the reaction Hydrolyzes single-stranded DNA or mismatched double-stranded DNA and polynucleotides, releasing free uracil.. In terms of biological role, excises uracil residues from the DNA which can arise as a result of misincorporation of dUMP residues by DNA polymerase or deamination of cytosines. Therefore may reduce deleterious uracil incorporation into the viral genome, particularly in terminally differentiated cells which lack DNA repair enzymes. This Saimiri sciureus (Common squirrel monkey) protein is Uracil-DNA glycosylase (46).